The chain runs to 550 residues: Hydroxylamine reductase (550 aa).

[2Fe-2S] cluster is bound by residues Cys3, Cys6, Cys18, and Cys25. Hybrid [4Fe-2O-2S] cluster is bound by residues His249, Glu273, Cys317, Cys405, Cys433, Cys458, Glu492, and Lys494. A Cysteine persulfide modification is found at Cys405.

This sequence belongs to the HCP family. [2Fe-2S] cluster is required as a cofactor. Hybrid [4Fe-2O-2S] cluster serves as cofactor.

Its subcellular location is the cytoplasm. The catalysed reaction is A + NH4(+) + H2O = hydroxylamine + AH2 + H(+). Its function is as follows. Catalyzes the reduction of hydroxylamine to form NH(3) and H(2)O. This Shigella flexneri serotype 5b (strain 8401) protein is Hydroxylamine reductase.